A 399-amino-acid chain; its full sequence is S-adenosylmethionine synthase (399 aa).

His-17 contributes to the ATP binding site. Asp-19 provides a ligand contact to Mg(2+). Glu-52 lines the K(+) pocket. L-methionine is bound by residues Glu-65 and Gln-109. Positions 109 to 119 are flexible loop; it reads QSADIAQGVDA. Residues 177–179, 243–244, Asp-252, 258–259, Ala-275, and Lys-279 each bind ATP; these read DSK, KF, and RK. Asp-252 contacts L-methionine. Lys-283 serves as a coordination point for L-methionine.

This sequence belongs to the AdoMet synthase family. In terms of assembly, homotetramer; dimer of dimers. It depends on Mg(2+) as a cofactor. Requires K(+) as cofactor.

The protein resides in the cytoplasm. The catalysed reaction is L-methionine + ATP + H2O = S-adenosyl-L-methionine + phosphate + diphosphate. The protein operates within amino-acid biosynthesis; S-adenosyl-L-methionine biosynthesis; S-adenosyl-L-methionine from L-methionine: step 1/1. Its function is as follows. Catalyzes the formation of S-adenosylmethionine (AdoMet) from methionine and ATP. The overall synthetic reaction is composed of two sequential steps, AdoMet formation and the subsequent tripolyphosphate hydrolysis which occurs prior to release of AdoMet from the enzyme. This Bradyrhizobium sp. (strain BTAi1 / ATCC BAA-1182) protein is S-adenosylmethionine synthase.